The chain runs to 105 residues: Small ribosomal subunit protein uS10 (105 aa).

This sequence belongs to the universal ribosomal protein uS10 family. In terms of assembly, part of the 30S ribosomal subunit.

Functionally, involved in the binding of tRNA to the ribosomes. The sequence is that of Small ribosomal subunit protein uS10 from Rickettsia conorii (strain ATCC VR-613 / Malish 7).